A 95-amino-acid polypeptide reads, in one-letter code: Aspartyl/glutamyl-tRNA(Asn/Gln) amidotransferase subunit C (95 aa).

This sequence belongs to the GatC family. In terms of assembly, heterotrimer of A, B and C subunits.

The enzyme catalyses L-glutamyl-tRNA(Gln) + L-glutamine + ATP + H2O = L-glutaminyl-tRNA(Gln) + L-glutamate + ADP + phosphate + H(+). The catalysed reaction is L-aspartyl-tRNA(Asn) + L-glutamine + ATP + H2O = L-asparaginyl-tRNA(Asn) + L-glutamate + ADP + phosphate + 2 H(+). Its function is as follows. Allows the formation of correctly charged Asn-tRNA(Asn) or Gln-tRNA(Gln) through the transamidation of misacylated Asp-tRNA(Asn) or Glu-tRNA(Gln) in organisms which lack either or both of asparaginyl-tRNA or glutaminyl-tRNA synthetases. The reaction takes place in the presence of glutamine and ATP through an activated phospho-Asp-tRNA(Asn) or phospho-Glu-tRNA(Gln). This Methylobacillus flagellatus (strain ATCC 51484 / DSM 6875 / VKM B-1610 / KT) protein is Aspartyl/glutamyl-tRNA(Asn/Gln) amidotransferase subunit C.